The following is a 365-amino-acid chain: Chorismate synthase (365 aa).

R46 contributes to the NADP(+) binding site. Residues 123 to 125, 241 to 242, G281, 296 to 300, and R322 each bind FMN; these read RSS, NG, and KPTPS.

Belongs to the chorismate synthase family. Homotetramer. FMNH2 serves as cofactor.

It catalyses the reaction 5-O-(1-carboxyvinyl)-3-phosphoshikimate = chorismate + phosphate. The protein operates within metabolic intermediate biosynthesis; chorismate biosynthesis; chorismate from D-erythrose 4-phosphate and phosphoenolpyruvate: step 7/7. Functionally, catalyzes the anti-1,4-elimination of the C-3 phosphate and the C-6 proR hydrogen from 5-enolpyruvylshikimate-3-phosphate (EPSP) to yield chorismate, which is the branch point compound that serves as the starting substrate for the three terminal pathways of aromatic amino acid biosynthesis. This reaction introduces a second double bond into the aromatic ring system. This is Chorismate synthase from Helicobacter pylori (strain HPAG1).